We begin with the raw amino-acid sequence, 128 residues long: Large ribosomal subunit protein bL12 (128 aa).

It belongs to the bacterial ribosomal protein bL12 family. Homodimer. Part of the ribosomal stalk of the 50S ribosomal subunit. Forms a multimeric L10(L12)X complex, where L10 forms an elongated spine to which 2 to 4 L12 dimers bind in a sequential fashion. Binds GTP-bound translation factors.

In terms of biological role, forms part of the ribosomal stalk which helps the ribosome interact with GTP-bound translation factors. Is thus essential for accurate translation. The polypeptide is Large ribosomal subunit protein bL12 (Desulfosudis oleivorans (strain DSM 6200 / JCM 39069 / Hxd3) (Desulfococcus oleovorans)).